Consider the following 261-residue polypeptide: Cytochrome c oxidase subunit 3 (261 aa).

The Mitochondrial matrix portion of the chain corresponds to 1–15 (MTHQTHAYHMVNPSP). The helical transmembrane segment at 16 to 34 (WPLTGALSALLMTSGLAMW) threads the bilayer. Residues 35–40 (FHYNSM) lie on the Mitochondrial intermembrane side of the membrane. A helical transmembrane segment spans residues 41–66 (LLLTLGLMTNLLTMYQWWRDIVREST). Over 67–72 (FQGHHT) the chain is Mitochondrial matrix. A helical membrane pass occupies residues 73 to 105 (LVVQKGLRYGMILFIISEVFFFSGFFWAFYHSS). The Mitochondrial intermembrane segment spans residues 106–128 (LAPTPELGGCWPPTGIHPLNPME). The helical transmembrane segment at 129–152 (VPLLNTSVLLASGVSITWAHHSLM) threads the bilayer. The Mitochondrial matrix portion of the chain corresponds to 153 to 155 (EGN). Residues 156–183 (RKHMLQALFITISLGVYFTLLQASEYYE) traverse the membrane as a helical segment. Topologically, residues 184 to 190 (APFTISD) are mitochondrial intermembrane. Residues 191–223 (GIYGSTFFVATGFHGLHVIIGSTFLIVCFLRQL) form a helical membrane-spanning segment. At 224–232 (KFHFTSNHH) the chain is on the mitochondrial matrix side. A helical transmembrane segment spans residues 233–256 (FGFEAAAWYWHFVDVVWLFLYVSI). The Mitochondrial intermembrane portion of the chain corresponds to 257 to 261 (YWWGS).

Belongs to the cytochrome c oxidase subunit 3 family. Component of the cytochrome c oxidase (complex IV, CIV), a multisubunit enzyme composed of 14 subunits. The complex is composed of a catalytic core of 3 subunits MT-CO1, MT-CO2 and MT-CO3, encoded in the mitochondrial DNA, and 11 supernumerary subunits COX4I, COX5A, COX5B, COX6A, COX6B, COX6C, COX7A, COX7B, COX7C, COX8 and NDUFA4, which are encoded in the nuclear genome. The complex exists as a monomer or a dimer and forms supercomplexes (SCs) in the inner mitochondrial membrane with NADH-ubiquinone oxidoreductase (complex I, CI) and ubiquinol-cytochrome c oxidoreductase (cytochrome b-c1 complex, complex III, CIII), resulting in different assemblies (supercomplex SCI(1)III(2)IV(1) and megacomplex MCI(2)III(2)IV(2)).

Its subcellular location is the mitochondrion inner membrane. The enzyme catalyses 4 Fe(II)-[cytochrome c] + O2 + 8 H(+)(in) = 4 Fe(III)-[cytochrome c] + 2 H2O + 4 H(+)(out). Component of the cytochrome c oxidase, the last enzyme in the mitochondrial electron transport chain which drives oxidative phosphorylation. The respiratory chain contains 3 multisubunit complexes succinate dehydrogenase (complex II, CII), ubiquinol-cytochrome c oxidoreductase (cytochrome b-c1 complex, complex III, CIII) and cytochrome c oxidase (complex IV, CIV), that cooperate to transfer electrons derived from NADH and succinate to molecular oxygen, creating an electrochemical gradient over the inner membrane that drives transmembrane transport and the ATP synthase. Cytochrome c oxidase is the component of the respiratory chain that catalyzes the reduction of oxygen to water. Electrons originating from reduced cytochrome c in the intermembrane space (IMS) are transferred via the dinuclear copper A center (CU(A)) of subunit 2 and heme A of subunit 1 to the active site in subunit 1, a binuclear center (BNC) formed by heme A3 and copper B (CU(B)). The BNC reduces molecular oxygen to 2 water molecules using 4 electrons from cytochrome c in the IMS and 4 protons from the mitochondrial matrix. In Ceratotherium simum (White rhinoceros), this protein is Cytochrome c oxidase subunit 3 (MT-CO3).